We begin with the raw amino-acid sequence, 197 residues long: Recombination protein RecR (197 aa).

The segment at Cys54–Cys69 adopts a C4-type zinc-finger fold. In terms of domain architecture, Toprim spans Thr77–Pro172.

This sequence belongs to the RecR family.

Its function is as follows. May play a role in DNA repair. It seems to be involved in an RecBC-independent recombinational process of DNA repair. It may act with RecF and RecO. This is Recombination protein RecR from Legionella pneumophila (strain Paris).